Here is a 281-residue protein sequence, read N- to C-terminus: Pantothenate synthetase (281 aa).

Residue 30 to 37 coordinates ATP; sequence MGNLHLGH. Residue histidine 37 is the Proton donor of the active site. Glutamine 61 lines the (R)-pantoate pocket. Residue glutamine 61 participates in beta-alanine binding. 149 to 152 is an ATP binding site; it reads GRKD. Glutamine 155 is a binding site for (R)-pantoate. ATP-binding positions include isoleucine 178 and 186 to 189; that span reads MSSR.

The protein belongs to the pantothenate synthetase family. In terms of assembly, homodimer.

The protein localises to the cytoplasm. The enzyme catalyses (R)-pantoate + beta-alanine + ATP = (R)-pantothenate + AMP + diphosphate + H(+). Its pathway is cofactor biosynthesis; (R)-pantothenate biosynthesis; (R)-pantothenate from (R)-pantoate and beta-alanine: step 1/1. Its function is as follows. Catalyzes the condensation of pantoate with beta-alanine in an ATP-dependent reaction via a pantoyl-adenylate intermediate. In Shewanella woodyi (strain ATCC 51908 / MS32), this protein is Pantothenate synthetase.